The chain runs to 220 residues: Germin-like protein subfamily 2 member 4 (220 aa).

Positions M1–A21 are cleaved as a signal peptide. C31 and C46 are joined by a disulfide. N51 and N69 each carry an N-linked (GlcNAc...) asparagine glycan. The Cupin type-1 domain maps to F58–E209. Residues H108, H110, E115, and H154 each contribute to the Mn(2+) site.

It belongs to the germin family. As to quaternary structure, oligomer (believed to be a pentamer but probably hexamer).

It is found in the secreted. Its subcellular location is the extracellular space. The protein localises to the apoplast. Its function is as follows. May play a role in plant defense. Probably has no oxalate oxidase activity even if the active site is conserved. The polypeptide is Germin-like protein subfamily 2 member 4 (GLP10) (Arabidopsis thaliana (Mouse-ear cress)).